A 145-amino-acid chain; its full sequence is Hemoglobin subunit beta-A (145 aa).

One can recognise a Globin domain in the interval 1–145 (MLTAEEKAAV…VANALAHRYH (145 aa)). 2 residues coordinate heme b: His-62 and His-91.

This sequence belongs to the globin family. As to quaternary structure, heterotetramer of two alpha chains and two beta chains. Red blood cells.

Functionally, involved in oxygen transport from the lung to the various peripheral tissues. This Bos javanicus (Wild banteng) protein is Hemoglobin subunit beta-A.